The sequence spans 463 residues: MKFPESLKGLKILVLGGGISGNSALNFLISEKAQPILCDQNQPERTVVPFFPDNIPPQSLPEVSLVIKSPGILPTHPILSYAADKKIPVVSEIDLGRYFFKGKIIGITGTDGKSTTTSLIAHLLKESFPDLKEGGNLGIPFTSFCKESISLAVLELSSYQLEDSSPLHLDVSVFLNLASDHLERHKTMENYFQAKLKIADLSNSNHTLIVSEKIKERILNSISYQCKLLSFGKTSDSNAFLDENSLKIKTSKFVYDISKFYLPGTHNRENLAASILAAEEIGGKPESIQTRIPLFRGLPHRFQIAGEKLGISFINDSKSTNLHSMLAGMATWKNIDQTCLILGGRPKQEDLKPLYNFLIRGIGCVVLFGEARATWESGIKNIIGEKLYCVENLNDTFEIFKKGNIFPVPGLNKDIIIRLSDSISISSFVFSPACASFDQYKNFEERGNHFLSLVNDFLDQIDS.

109-115 lines the ATP pocket; sequence GTDGKST.

The protein belongs to the MurCDEF family.

It localises to the cytoplasm. It catalyses the reaction UDP-N-acetyl-alpha-D-muramoyl-L-alanine + D-glutamate + ATP = UDP-N-acetyl-alpha-D-muramoyl-L-alanyl-D-glutamate + ADP + phosphate + H(+). It functions in the pathway cell wall biogenesis; peptidoglycan biosynthesis. Its function is as follows. Cell wall formation. Catalyzes the addition of glutamate to the nucleotide precursor UDP-N-acetylmuramoyl-L-alanine (UMA). This is UDP-N-acetylmuramoylalanine--D-glutamate ligase from Leptospira interrogans serogroup Icterohaemorrhagiae serovar Lai (strain 56601).